A 179-amino-acid polypeptide reads, in one-letter code: Large ribosomal subunit protein uL5 (179 aa).

It belongs to the universal ribosomal protein uL5 family. In terms of assembly, part of the 50S ribosomal subunit; part of the 5S rRNA/L5/L18/L25 subcomplex. Contacts the 5S rRNA and the P site tRNA. Forms a bridge to the 30S subunit in the 70S ribosome.

Functionally, this is one of the proteins that bind and probably mediate the attachment of the 5S RNA into the large ribosomal subunit, where it forms part of the central protuberance. In the 70S ribosome it contacts protein S13 of the 30S subunit (bridge B1b), connecting the 2 subunits; this bridge is implicated in subunit movement. Contacts the P site tRNA; the 5S rRNA and some of its associated proteins might help stabilize positioning of ribosome-bound tRNAs. In Herminiimonas arsenicoxydans, this protein is Large ribosomal subunit protein uL5.